The sequence spans 220 residues: DNA mismatch repair protein MutH (220 aa).

Belongs to the MutH family.

The protein resides in the cytoplasm. Functionally, sequence-specific endonuclease that cleaves unmethylated GATC sequences. It is involved in DNA mismatch repair. This chain is DNA mismatch repair protein MutH, found in Buchnera aphidicola subsp. Baizongia pistaciae (strain Bp).